Here is a 490-residue protein sequence, read N- to C-terminus: Aspartyl/glutamyl-tRNA(Asn/Gln) amidotransferase subunit B (490 aa).

It belongs to the GatB/GatE family. GatB subfamily. In terms of assembly, heterotrimer of A, B and C subunits.

It catalyses the reaction L-glutamyl-tRNA(Gln) + L-glutamine + ATP + H2O = L-glutaminyl-tRNA(Gln) + L-glutamate + ADP + phosphate + H(+). It carries out the reaction L-aspartyl-tRNA(Asn) + L-glutamine + ATP + H2O = L-asparaginyl-tRNA(Asn) + L-glutamate + ADP + phosphate + 2 H(+). Allows the formation of correctly charged Asn-tRNA(Asn) or Gln-tRNA(Gln) through the transamidation of misacylated Asp-tRNA(Asn) or Glu-tRNA(Gln) in organisms which lack either or both of asparaginyl-tRNA or glutaminyl-tRNA synthetases. The reaction takes place in the presence of glutamine and ATP through an activated phospho-Asp-tRNA(Asn) or phospho-Glu-tRNA(Gln). This is Aspartyl/glutamyl-tRNA(Asn/Gln) amidotransferase subunit B from Synechococcus sp. (strain JA-2-3B'a(2-13)) (Cyanobacteria bacterium Yellowstone B-Prime).